We begin with the raw amino-acid sequence, 469 residues long: Adenosylhomocysteinase (469 aa).

Thr63, Asp139, and Glu164 together coordinate substrate. An NAD(+)-binding site is contributed by Thr165–Thr167. Residues Lys194 and Asp198 each coordinate substrate. NAD(+) is bound by residues Asn199, Gly228 to Gly233, Glu251, Asn300, Ile321 to His323, and Asn375.

This sequence belongs to the adenosylhomocysteinase family. NAD(+) serves as cofactor.

It is found in the cytoplasm. The catalysed reaction is S-adenosyl-L-homocysteine + H2O = L-homocysteine + adenosine. The protein operates within amino-acid biosynthesis; L-homocysteine biosynthesis; L-homocysteine from S-adenosyl-L-homocysteine: step 1/1. Its function is as follows. May play a key role in the regulation of the intracellular concentration of adenosylhomocysteine. The protein is Adenosylhomocysteinase of Pseudomonas putida (strain GB-1).